The primary structure comprises 48 residues: MAKYRCGNCWREFDDEQLRALPGVRCPYCGYKIIYMVRKPTVKVVKAI.

Zn(2+) is bound by residues C9, C26, and C29.

The protein belongs to the archaeal Rpo12/eukaryotic RPC10 RNA polymerase subunit family. As to quaternary structure, part of the RNA polymerase complex. Zn(2+) serves as cofactor.

The protein localises to the cytoplasm. It carries out the reaction RNA(n) + a ribonucleoside 5'-triphosphate = RNA(n+1) + diphosphate. In terms of biological role, DNA-dependent RNA polymerase (RNAP) catalyzes the transcription of DNA into RNA using the four ribonucleoside triphosphates as substrates. The chain is DNA-directed RNA polymerase subunit Rpo12 from Sulfurisphaera tokodaii (strain DSM 16993 / JCM 10545 / NBRC 100140 / 7) (Sulfolobus tokodaii).